Here is a 291-residue protein sequence, read N- to C-terminus: Putative transport permease ycf38 (291 aa).

6 helical membrane-spanning segments follow: residues 47 to 67, 87 to 107, 135 to 155, 165 to 185, 195 to 215, and 262 to 282; these read ATLM…GGLF, SGII…PLMF, FMTC…LFMG, MIFG…SLAL, LLAF…ALAP, and ICLG…AYLV. Positions 47-289 constitute an ABC transmembrane type-2 domain; the sequence is ATLMAGIIQP…YLVSNILKAK (243 aa).

It belongs to the ABC-2 integral membrane protein family.

It localises to the plastid. The protein localises to the chloroplast membrane. This Pyropia yezoensis (Susabi-nori) protein is Putative transport permease ycf38 (ycf38).